The sequence spans 506 residues: Maturase K (506 aa).

The protein belongs to the intron maturase 2 family. MatK subfamily.

It localises to the plastid. The protein resides in the chloroplast. Functionally, usually encoded in the trnK tRNA gene intron. Probably assists in splicing its own and other chloroplast group II introns. This is Maturase K from Ocimum basilicum (Sweet basil).